Reading from the N-terminus, the 125-residue chain is Fatty acid-binding protein, liver-type (125 aa).

This sequence belongs to the calycin superfamily. Fatty-acid binding protein (FABP) family.

The protein localises to the cytoplasm. The chain is Fatty acid-binding protein, liver-type (fabp1) from Takifugu rubripes (Japanese pufferfish).